The following is a 185-amino-acid chain: Ribosome-recycling factor (185 aa).

It belongs to the RRF family.

Its subcellular location is the cytoplasm. Its function is as follows. Responsible for the release of ribosomes from messenger RNA at the termination of protein biosynthesis. May increase the efficiency of translation by recycling ribosomes from one round of translation to another. The chain is Ribosome-recycling factor from Helicobacter pylori (strain Shi470).